Reading from the N-terminus, the 65-residue chain is MKRSSMDLVYKPISGTIGSVSGTIGSVSSVSGTIGSVSGTIGSVSGTIGSVSGTIGSVSGTIGSV.

TIGSVS motif repeat units follow at residues 16–21 (TIGSVS), 23–28 (TIGSVS), 33–38 (TIGSVS), 40–45 (TIGSVS), 47–52 (TIGSVS), and 54–59 (TIGSVS). 6 positions are modified to methylcyclopropylglycine: Ile-17, Ile-24, Ile-34, Ile-41, Ile-48, and Ile-55.

Is subject to maturation by TigE, that catalyzes the formation of methylcyclopropylglycine (mCPG) residues from isoleucine residues residing in the repeating TIGSVS motifs.

Precursor peptide which undergoes post-translational modifications by tailoring enzymes, leading to the mature natural product. In Paramaledivibacter caminithermalis (strain DSM 15212 / CIP 107654 / DViRD3) (Clostridium caminithermale), this protein is Precursor peptide TigB.